Here is a 164-residue protein sequence, read N- to C-terminus: NADH-quinone oxidoreductase subunit I (164 aa).

4Fe-4S ferredoxin-type domains follow at residues 55 to 85 and 95 to 124; these read LRRY…IDAE and TRYD…EGPN. Residues Cys65, Cys68, Cys71, Cys75, Cys104, Cys107, Cys110, and Cys114 each contribute to the [4Fe-4S] cluster site.

This sequence belongs to the complex I 23 kDa subunit family. NDH-1 is composed of 14 different subunits. Subunits NuoA, H, J, K, L, M, N constitute the membrane sector of the complex. [4Fe-4S] cluster serves as cofactor.

Its subcellular location is the cell inner membrane. The catalysed reaction is a quinone + NADH + 5 H(+)(in) = a quinol + NAD(+) + 4 H(+)(out). In terms of biological role, NDH-1 shuttles electrons from NADH, via FMN and iron-sulfur (Fe-S) centers, to quinones in the respiratory chain. The immediate electron acceptor for the enzyme in this species is believed to be ubiquinone. Couples the redox reaction to proton translocation (for every two electrons transferred, four hydrogen ions are translocated across the cytoplasmic membrane), and thus conserves the redox energy in a proton gradient. This chain is NADH-quinone oxidoreductase subunit I, found in Dinoroseobacter shibae (strain DSM 16493 / NCIMB 14021 / DFL 12).